We begin with the raw amino-acid sequence, 441 residues long: GTPase Der (441 aa).

EngA-type G domains follow at residues 4–168 (PVVA…PEDI) and 177–352 (IRIA…EQNS). Residues 10-17 (GRPNVGKS), 57-61 (DTGGI), 121-124 (NKVE), 183-190 (GRPNVGKS), 230-234 (DTAGM), and 295-298 (NKWD) contribute to the GTP site. Residues 353–437 (TRVATATLNT…PIRMIVRQKD (85 aa)) enclose the KH-like domain.

It belongs to the TRAFAC class TrmE-Era-EngA-EngB-Septin-like GTPase superfamily. EngA (Der) GTPase family. Associates with the 50S ribosomal subunit.

In terms of biological role, GTPase that plays an essential role in the late steps of ribosome biogenesis. This is GTPase Der from Desulfitobacterium hafniense (strain DSM 10664 / DCB-2).